The sequence spans 99 residues: DNA-directed RNA polymerase subunit omega (99 aa).

This sequence belongs to the RNA polymerase subunit omega family. In terms of assembly, the RNAP catalytic core consists of 2 alpha, 1 beta, 1 beta' and 1 omega subunit. When a sigma factor is associated with the core the holoenzyme is formed, which can initiate transcription.

The catalysed reaction is RNA(n) + a ribonucleoside 5'-triphosphate = RNA(n+1) + diphosphate. In terms of biological role, promotes RNA polymerase assembly. Latches the N- and C-terminal regions of the beta' subunit thereby facilitating its interaction with the beta and alpha subunits. The chain is DNA-directed RNA polymerase subunit omega from Stenotrophomonas maltophilia (strain K279a).